The sequence spans 199 residues: Protein C (199 aa).

Polar residues-rich tracts occupy residues 19–34 and 43–57; these read QLIS…SYSA and KTTQ…SAPP. Residues 19–67 form a disordered region; sequence QLISPRPSTSLNSYSAPTPKKTYRKTTQSTQEPSNSAPPSVNQKSNQQK. The span at 58–67 shows a compositional bias: low complexity; sequence SVNQKSNQQK.

It belongs to the respirovirus protein C family.

The protein is Protein C (P/V/C) of Human parainfluenza 3 virus (strain Wash/47885/57) (HPIV-3).